The primary structure comprises 441 residues: Protein dcd1A (441 aa).

A signal peptide spans 1 to 23 (MKIFNKLIFLIIQCILIISVTNA). Asn-45, Asn-261, Asn-308, and Asn-419 each carry an N-linked (GlcNAc...) asparagine glycan.

Its subcellular location is the secreted. The protein is Protein dcd1A (dcd1A) of Dictyostelium discoideum (Social amoeba).